Reading from the N-terminus, the 1479-residue chain is C-type mannose receptor 2 (1479 aa).

The first 30 residues, methionine 1 to proline 30, serve as a signal peptide directing secretion. The Extracellular segment spans residues glycine 31–alanine 1414. In terms of domain architecture, Ricin B-type lectin spans proline 41–leucine 167. Cysteine 54 and cysteine 68 are joined by a disulfide. A glycan (N-linked (GlcNAc...) (complex) asparagine) is linked at asparagine 69. Cysteine 93 and cysteine 112 form a disulfide bridge. N-linked (GlcNAc...) asparagine glycosylation is present at asparagine 140. Residues serine 182 to isoleucine 230 form the Fibronectin type-II domain. 4 disulfides stabilise this stretch: cysteine 187/cysteine 213, cysteine 201/cysteine 228, cysteine 266/cysteine 359, and cysteine 335/cysteine 351. One can recognise a C-type lectin 1 domain in the interval leucine 244 to lysine 360. N-linked (GlcNAc...) asparagine glycosylation is present at asparagine 364. 4 C-type lectin domains span residues phenylalanine 389 to lysine 505, histidine 528 to cysteine 644, lysine 678 to lysine 809, and phenylalanine 832 to lysine 951. 2 disulfide bridges follow: cysteine 410–cysteine 504 and cysteine 481–cysteine 496. An N-linked (GlcNAc...) asparagine glycan is attached at asparagine 588. 5 disulfide bridges follow: cysteine 618–cysteine 635, cysteine 704–cysteine 808, cysteine 785–cysteine 800, cysteine 853–cysteine 950, and cysteine 927–cysteine 942. Residues asparagine 954 and asparagine 1029 are each glycosylated (N-linked (GlcNAc...) asparagine). C-type lectin domains lie at phenylalanine 979–cysteine 1107, tyrosine 1132–cysteine 1243, and phenylalanine 1273–cysteine 1393. The cysteines at positions 1078 and 1098 are disulfide-linked. Lysine 1142 participates in a covalent cross-link: Glycyl lysine isopeptide (Lys-Gly) (interchain with G-Cter in SUMO1). The cysteines at positions 1220 and 1234 are disulfide-linked. Asparagine 1350 is a glycosylation site (N-linked (GlcNAc...) asparagine). Cysteine 1369 and cysteine 1384 are joined by a disulfide. Residues leucine 1415–leucine 1435 form a helical membrane-spanning segment. Topologically, residues tyrosine 1436–glutamate 1479 are cytoplasmic. A disordered region spans residues alanine 1450–glutamate 1479.

As to quaternary structure, interacts with C-terminal region of type I collagen/COL1A1. Interacts directly with PLAUR/UPAR and PLAU/pro-UPA to form a tri-molecular complex. Interacts with collagen V. Post-translationally, N-glycosylated. In terms of tissue distribution, ubiquitous with low expression in brain, placenta, lung, kidney, pancreas, spleen, thymus and colon. Expressed in endothelial cells, fibroblasts and macrophages. Highly expressed in fetal lung and kidney.

It localises to the membrane. May play a role as endocytotic lectin receptor displaying calcium-dependent lectin activity. Internalizes glycosylated ligands from the extracellular space for release in an endosomal compartment via clathrin-mediated endocytosis. May be involved in plasminogen activation system controlling the extracellular level of PLAUR/PLAU, and thus may regulate protease activity at the cell surface. May contribute to cellular uptake, remodeling and degradation of extracellular collagen matrices. May play a role during cancer progression as well as in other chronic tissue destructive diseases acting on collagen turnover. May participate in remodeling of extracellular matrix cooperating with the matrix metalloproteinases (MMPs). This Homo sapiens (Human) protein is C-type mannose receptor 2 (MRC2).